Reading from the N-terminus, the 645-residue chain is Beta-galactosidase BgaA (645 aa).

R102 is a binding site for substrate. C106 contributes to the Zn(2+) binding site. N140 provides a ligand contact to substrate. E141 functions as the Proton donor in the catalytic mechanism. Zn(2+) is bound by residues C150, C152, and C155. E312 serves as the catalytic Nucleophile. Substrate-binding positions include W320 and 360 to 363; that span reads EQMH.

The protein belongs to the glycosyl hydrolase 42 family.

It carries out the reaction Hydrolysis of terminal non-reducing beta-D-galactose residues in beta-D-galactosides.. Hydrolyzes chromogen 5-bromo-4-chloro-3-indolyl-beta-D-galactopyranoside (X-Gal) and p-nitrophenyl-beta-D-galactoside (pNPGal). The chain is Beta-galactosidase BgaA from Thermus sp.